The following is a 284-amino-acid chain: L-ribulose-5-phosphate 3-epimerase UlaE (284 aa).

It belongs to the L-ribulose-5-phosphate 3-epimerase family.

It carries out the reaction L-ribulose 5-phosphate = L-xylulose 5-phosphate. The protein operates within cofactor degradation; L-ascorbate degradation; D-xylulose 5-phosphate from L-ascorbate: step 3/4. Catalyzes the isomerization of L-xylulose-5-phosphate to L-ribulose-5-phosphate. Is involved in the anaerobic L-ascorbate utilization. This chain is L-ribulose-5-phosphate 3-epimerase UlaE, found in Salmonella typhimurium (strain LT2 / SGSC1412 / ATCC 700720).